A 148-amino-acid chain; its full sequence is Methylglyoxal synthase (148 aa).

The 145-residue stretch at 4-148 (VSVPAIKRIV…LSYNTKVKKD (145 aa)) folds into the MGS-like domain. Residues His-17, Lys-21, 43–46 (TGTT), and 63–64 (SG) each bind substrate. Residue Asp-69 is the Proton donor/acceptor of the active site. His-96 provides a ligand contact to substrate.

The protein belongs to the methylglyoxal synthase family.

It carries out the reaction dihydroxyacetone phosphate = methylglyoxal + phosphate. Catalyzes the formation of methylglyoxal from dihydroxyacetone phosphate. The sequence is that of Methylglyoxal synthase from Leptospira interrogans serogroup Icterohaemorrhagiae serovar copenhageni (strain Fiocruz L1-130).